Here is a 466-residue protein sequence, read N- to C-terminus: Putative transcription factor bHLH041 (466 aa).

Disordered stretches follow at residues 108 to 129 (PANS…SLSP), 194 to 213 (LTGP…KGRA), and 260 to 289 (RENA…TQLQ). The span at 120-129 (PSSSSSSLSP) shows a compositional bias: low complexity. The segment covering 268 to 279 (EGSGGSGGGGRY) has biased composition (gly residues). A bHLH domain is found at 285–334 (ATQLQHMISERKRREKLNESFQALRSLLPPGTKKDKASVLSIAREQLSSL).

In terms of assembly, homodimer.

The protein resides in the nucleus. In Arabidopsis thaliana (Mouse-ear cress), this protein is Putative transcription factor bHLH041 (BHLH41).